The following is a 313-amino-acid chain: Formimidoylglutamase (313 aa).

His-130, Asp-155, His-157, Asp-159, Asp-241, and Asp-243 together coordinate Mn(2+).

Belongs to the arginase family. The cofactor is Mn(2+).

The catalysed reaction is N-formimidoyl-L-glutamate + H2O = formamide + L-glutamate. The protein operates within amino-acid degradation; L-histidine degradation into L-glutamate; L-glutamate from N-formimidoyl-L-glutamate (hydrolase route): step 1/1. Catalyzes the conversion of N-formimidoyl-L-glutamate to L-glutamate and formamide. In Salmonella enteritidis PT4 (strain P125109), this protein is Formimidoylglutamase.